A 334-amino-acid polypeptide reads, in one-letter code: Nucleoid-associated protein PFL_1060 (334 aa).

It belongs to the YejK family.

Its subcellular location is the cytoplasm. The protein localises to the nucleoid. This Pseudomonas fluorescens (strain ATCC BAA-477 / NRRL B-23932 / Pf-5) protein is Nucleoid-associated protein PFL_1060.